The primary structure comprises 248 residues: MAGHSQFKNIMHRKGRVDAVRSKVFGKLAREITVAAKLGTPDPAMNPRLRAAVLAARAENMPKDNIERAIKKACGGDAETYEEIRYEGYGPGGAALIVEAQTDNRNRTASDVRSAFTKAGGSLAETGAVSFMFDRVGLVAFDAKVADADTMLEAAIEAGADDVKSDESGHEVTCEQSALGEVAKALEARFGEPRRTSLVWRPQNTVEVDDETGEKLIRLVEMIEDQDDVQNVFVNFAVSDALMAKLHD.

This sequence belongs to the TACO1 family.

It is found in the cytoplasm. The protein is Probable transcriptional regulatory protein Mnod_7401 of Methylobacterium nodulans (strain LMG 21967 / CNCM I-2342 / ORS 2060).